Consider the following 150-residue polypeptide: Photosystem I reaction center subunit XI (150 aa).

Over 1–72 (MSDFIQSYNN…DKLGPLRNTD (72 aa)) the chain is Stromal. A helical transmembrane segment spans residues 73 to 93 (VALLSGFLSAVGLIIILTVCL). Residues 94–118 (SMYGNVSFDKDDAKDLLQTTEGWGQ) are Lumenal-facing. The helical transmembrane segment at 119 to 139 (FTAGFLVGAVGGSGFAYLLLA) threads the bilayer. At 140-150 (NIPVLQNLGLS) the chain is on the stromal side.

It belongs to the PsaL family.

It localises to the plastid. The protein localises to the chloroplast thylakoid membrane. In Gracilaria tenuistipitata var. liui (Red alga), this protein is Photosystem I reaction center subunit XI.